Here is a 520-residue protein sequence, read N- to C-terminus: MAISNKQKAAIAAIVLVGGVATGGVLLSGRSAPEEQGGHSESKGHGDTEHHGKQAAEADHKDDKSHGDGEHHEVKKGPNGGALFSRDGYDVEIGTAESKGEARIRLWVSKSGKAVANGVAATGQLVRATGESQALKFVVSGDALESQQPVAEPHVFDVTANVTLPGSSSPLAVRLSKEEGKIELTADQLAKTGVVVQTAGSAKVQAGVQFPGEIRFNEDKTAHVVPRLAGVVESVPANIGQQVKKGQVLAVIASTGLSDQRSELLAAQKRLDLARVTYDREKKLWEQKISADEDYLSARNALQEAQISVQNAQQKLTAIGASNSSTALNRYELRAPFAGMIVEKHISLGEAVADNANVFTLSDLSSVWAEFVVSAKDVERVRIGEKASINSASSDVKADGTVSYVGSLLGEQTRTAKARVTLTNPQMAWRPGLFVTVDVFGADVEVPVAVKTEAVQDVNGESVVFVAVQGGFVPQPVKVGRTNGKVIEIVEGLKPGARYAAANSFVLKAELGKSSAEHGH.

Positions 28–85 (SGRSAPEEQGGHSESKGHGDTEHHGKQAAEADHKDDKSHGDGEHHEVKKGPNGGALFS) are disordered. Residues 32 to 76 (APEEQGGHSESKGHGDTEHHGKQAAEADHKDDKSHGDGEHHEVKK) show a composition bias toward basic and acidic residues.

This sequence belongs to the membrane fusion protein (MFP) (TC 8.A.1) family.

CzcA and CzcB together would act in zinc efflux nearly as effectively as the complete czc efflux system (CzcABC). The CzcB protein is thought to funnel zinc cations to the CzcA transport protein. This is Cation efflux system protein CzcB (czcB) from Alcaligenes sp. (strain CT14).